We begin with the raw amino-acid sequence, 323 residues long: Serine/threonine-protein phosphatase PP1-gamma catalytic subunit (323 aa).

Residues Asp64, His66, Asp92, and Asn124 each contribute to the Mn(2+) site. His125 functions as the Proton donor in the catalytic mechanism. Residues His173 and His248 each contribute to the Mn(2+) site. Residues 300–323 (EKKKPNASRPVTPPRGMITKQAKK) are disordered.

Belongs to the PPP phosphatase family. PP-1 subfamily. PP1 comprises a catalytic subunit, ppp1c1, ppp1cb or ppp1cc, which is folded into its native form by inhibitor 2 and glycogen synthetase kinase 3, and then is complexed to one or several targeting or regulatory subunits. Mn(2+) serves as cofactor.

Its subcellular location is the cytoplasm. The protein localises to the nucleus. The protein resides in the cleavage furrow. It localises to the nucleolus. It is found in the nucleoplasm. Its subcellular location is the chromosome. The protein localises to the centromere. The protein resides in the kinetochore. It localises to the nucleus speckle. It is found in the midbody. Its subcellular location is the mitochondrion. The protein localises to the cytoskeleton. The protein resides in the microtubule organizing center. The enzyme catalyses O-phospho-L-seryl-[protein] + H2O = L-seryl-[protein] + phosphate. The catalysed reaction is O-phospho-L-threonyl-[protein] + H2O = L-threonyl-[protein] + phosphate. In terms of biological role, protein phosphatase 1 (PP1) is essential for cell division, and participates in the regulation of glycogen metabolism, muscle contractility and protein synthesis. Promotes nuclear envelope reassembly by targeting nuclear membrane vesicles to chromatin at the end of mitosis. Acts by dephosphorylating membrane proteins such as lamin B receptor (lbr) to regulate the binding of membrane proteins to chromatin. In Xenopus tropicalis (Western clawed frog), this protein is Serine/threonine-protein phosphatase PP1-gamma catalytic subunit.